The sequence spans 456 residues: Bifunctional protein GlmU (456 aa).

The pyrophosphorylase stretch occupies residues 1 to 229 (MLNNAMSVVI…LSEVEGVNNR (229 aa)). Residues 11–14 (LAAG), Lys-25, Gln-76, 81–82 (GT), 103–105 (YGD), Gly-140, Glu-154, Asn-169, and Asn-227 each bind UDP-N-acetyl-alpha-D-glucosamine. Asp-105 contributes to the Mg(2+) binding site. Asn-227 provides a ligand contact to Mg(2+). Residues 230 to 250 (LQLSRLERVYQSEQAEKLLLA) form a linker region. The N-acetyltransferase stretch occupies residues 251–456 (GVMLRDPARF…EGWRRPVKKK (206 aa)). The UDP-N-acetyl-alpha-D-glucosamine site is built by Arg-333 and Lys-351. The Proton acceptor role is filled by His-363. UDP-N-acetyl-alpha-D-glucosamine contacts are provided by Tyr-366 and Asn-377. Acetyl-CoA-binding positions include Ala-380, 386–387 (NY), Ser-405, Ala-423, and Arg-440.

It in the N-terminal section; belongs to the N-acetylglucosamine-1-phosphate uridyltransferase family. This sequence in the C-terminal section; belongs to the transferase hexapeptide repeat family. Homotrimer. Mg(2+) serves as cofactor.

The protein localises to the cytoplasm. It catalyses the reaction alpha-D-glucosamine 1-phosphate + acetyl-CoA = N-acetyl-alpha-D-glucosamine 1-phosphate + CoA + H(+). The catalysed reaction is N-acetyl-alpha-D-glucosamine 1-phosphate + UTP + H(+) = UDP-N-acetyl-alpha-D-glucosamine + diphosphate. The protein operates within nucleotide-sugar biosynthesis; UDP-N-acetyl-alpha-D-glucosamine biosynthesis; N-acetyl-alpha-D-glucosamine 1-phosphate from alpha-D-glucosamine 6-phosphate (route II): step 2/2. It functions in the pathway nucleotide-sugar biosynthesis; UDP-N-acetyl-alpha-D-glucosamine biosynthesis; UDP-N-acetyl-alpha-D-glucosamine from N-acetyl-alpha-D-glucosamine 1-phosphate: step 1/1. Its pathway is bacterial outer membrane biogenesis; LPS lipid A biosynthesis. Its function is as follows. Catalyzes the last two sequential reactions in the de novo biosynthetic pathway for UDP-N-acetylglucosamine (UDP-GlcNAc). The C-terminal domain catalyzes the transfer of acetyl group from acetyl coenzyme A to glucosamine-1-phosphate (GlcN-1-P) to produce N-acetylglucosamine-1-phosphate (GlcNAc-1-P), which is converted into UDP-GlcNAc by the transfer of uridine 5-monophosphate (from uridine 5-triphosphate), a reaction catalyzed by the N-terminal domain. The sequence is that of Bifunctional protein GlmU from Escherichia coli O8 (strain IAI1).